The sequence spans 714 residues: Polyribonucleotide nucleotidyltransferase (714 aa).

Mg(2+) is bound by residues Asp488 and Asp494. Residues 555-614 enclose the KH domain; sequence PRIEVMNIPTDKIRDVIGSGGKVIREIVEKTGAKINIEDDGTVKIASSNGKEIEAAKKWI. In terms of domain architecture, S1 motif spans 624 to 692; that stretch reads GEIYEGTVVK…ERGKVRLSMK (69 aa).

This sequence belongs to the polyribonucleotide nucleotidyltransferase family. Requires Mg(2+) as cofactor.

Its subcellular location is the cytoplasm. It catalyses the reaction RNA(n+1) + phosphate = RNA(n) + a ribonucleoside 5'-diphosphate. Functionally, involved in mRNA degradation. Catalyzes the phosphorolysis of single-stranded polyribonucleotides processively in the 3'- to 5'-direction. This Brucella suis biovar 1 (strain 1330) protein is Polyribonucleotide nucleotidyltransferase.